The following is a 253-amino-acid chain: tRNA pseudouridine synthase A (253 aa).

Asp-53 serves as the catalytic Nucleophile. Residue Tyr-111 participates in substrate binding.

This sequence belongs to the tRNA pseudouridine synthase TruA family. In terms of assembly, homodimer.

It carries out the reaction uridine(38/39/40) in tRNA = pseudouridine(38/39/40) in tRNA. Formation of pseudouridine at positions 38, 39 and 40 in the anticodon stem and loop of transfer RNAs. This Oceanobacillus iheyensis (strain DSM 14371 / CIP 107618 / JCM 11309 / KCTC 3954 / HTE831) protein is tRNA pseudouridine synthase A.